The following is a 207-amino-acid chain: Uracil phosphoribosyltransferase (207 aa).

5-phospho-alpha-D-ribose 1-diphosphate contacts are provided by residues Arg-77, Arg-102, and 129–137 (DPMLATGGS). Uracil is bound by residues Ile-192 and 197-199 (GDA). Residue Asp-198 coordinates 5-phospho-alpha-D-ribose 1-diphosphate.

This sequence belongs to the UPRTase family. Requires Mg(2+) as cofactor.

It carries out the reaction UMP + diphosphate = 5-phospho-alpha-D-ribose 1-diphosphate + uracil. Its pathway is pyrimidine metabolism; UMP biosynthesis via salvage pathway; UMP from uracil: step 1/1. Its activity is regulated as follows. Allosterically activated by GTP. Its function is as follows. Catalyzes the conversion of uracil and 5-phospho-alpha-D-ribose 1-diphosphate (PRPP) to UMP and diphosphate. The sequence is that of Uracil phosphoribosyltransferase from Dictyoglomus thermophilum (strain ATCC 35947 / DSM 3960 / H-6-12).